The chain runs to 232 residues: Putative caffeoyl-CoA O-methyltransferase At1g67980 (232 aa).

Residue Lys-8 coordinates substrate. Residues Val-52, Glu-74, 76–77 (GV), Ser-82, and Asp-100 contribute to the S-adenosyl-L-methionine site. Residue Asp-149 participates in substrate binding. An a divalent metal cation-binding site is contributed by Asp-149. Asp-151 contributes to the S-adenosyl-L-methionine binding site. A divalent metal cation-binding residues include Asp-175 and Asn-176.

It belongs to the class I-like SAM-binding methyltransferase superfamily. Cation-dependent O-methyltransferase family. CCoAMT subfamily. Requires a divalent metal cation as cofactor.

It catalyses the reaction (E)-caffeoyl-CoA + S-adenosyl-L-methionine = (E)-feruloyl-CoA + S-adenosyl-L-homocysteine + H(+). It functions in the pathway aromatic compound metabolism; phenylpropanoid biosynthesis. Its function is as follows. Methylates caffeoyl-CoA to feruloyl-CoA and 5-hydroxyferuloyl-CoA to sinapoyl-CoA. Plays a role in the synthesis of feruloylated polysaccharides. Involved in the reinforcement of the plant cell wall. Also involved in the responding to wounding or pathogen challenge by the increased formation of cell wall-bound ferulic acid polymers. This Arabidopsis thaliana (Mouse-ear cress) protein is Putative caffeoyl-CoA O-methyltransferase At1g67980.